We begin with the raw amino-acid sequence, 95 residues long: Acylphosphatase (95 aa).

The Acylphosphatase-like domain occupies 9–95 (RLTAWVHGRV…KGGLTGFVER (87 aa)). Residues Arg24 and Asn42 contribute to the active site.

This sequence belongs to the acylphosphatase family.

The enzyme catalyses an acyl phosphate + H2O = a carboxylate + phosphate + H(+). This chain is Acylphosphatase (acyP), found in Saccharopolyspora erythraea (strain ATCC 11635 / DSM 40517 / JCM 4748 / NBRC 13426 / NCIMB 8594 / NRRL 2338).